Here is a 471-residue protein sequence, read N- to C-terminus: Siroheme synthase 1 (471 aa).

A precorrin-2 dehydrogenase /sirohydrochlorin ferrochelatase region spans residues Met-1–Leu-203. NAD(+) is bound by residues Glu-22 to Val-23 and Lys-43 to Lys-44. At Ser-128 the chain carries Phosphoserine. The tract at residues Gly-215–Ala-471 is uroporphyrinogen-III C-methyltransferase. Pro-224 provides a ligand contact to S-adenosyl-L-methionine. The active-site Proton acceptor is the Asp-247. The active-site Proton donor is the Lys-269. S-adenosyl-L-methionine contacts are provided by residues Gly-300 to Asp-302, Ile-305, Thr-330 to Ala-331, Met-382, and Gly-411.

In the N-terminal section; belongs to the precorrin-2 dehydrogenase / sirohydrochlorin ferrochelatase family. This sequence in the C-terminal section; belongs to the precorrin methyltransferase family.

The catalysed reaction is uroporphyrinogen III + 2 S-adenosyl-L-methionine = precorrin-2 + 2 S-adenosyl-L-homocysteine + H(+). It carries out the reaction precorrin-2 + NAD(+) = sirohydrochlorin + NADH + 2 H(+). The enzyme catalyses siroheme + 2 H(+) = sirohydrochlorin + Fe(2+). It participates in cofactor biosynthesis; adenosylcobalamin biosynthesis; precorrin-2 from uroporphyrinogen III: step 1/1. Its pathway is cofactor biosynthesis; adenosylcobalamin biosynthesis; sirohydrochlorin from precorrin-2: step 1/1. It functions in the pathway porphyrin-containing compound metabolism; siroheme biosynthesis; precorrin-2 from uroporphyrinogen III: step 1/1. The protein operates within porphyrin-containing compound metabolism; siroheme biosynthesis; siroheme from sirohydrochlorin: step 1/1. It participates in porphyrin-containing compound metabolism; siroheme biosynthesis; sirohydrochlorin from precorrin-2: step 1/1. Functionally, multifunctional enzyme that catalyzes the SAM-dependent methylations of uroporphyrinogen III at position C-2 and C-7 to form precorrin-2 via precorrin-1. Then it catalyzes the NAD-dependent ring dehydrogenation of precorrin-2 to yield sirohydrochlorin. Finally, it catalyzes the ferrochelation of sirohydrochlorin to yield siroheme. In Cronobacter sakazakii (strain ATCC BAA-894) (Enterobacter sakazakii), this protein is Siroheme synthase 1.